Here is a 448-residue protein sequence, read N- to C-terminus: Beta-glucosidase A (448 aa).

Glu166 serves as the catalytic Proton donor. Glu355 acts as the Nucleophile in catalysis.

Belongs to the glycosyl hydrolase 1 family.

It catalyses the reaction Hydrolysis of terminal, non-reducing beta-D-glucosyl residues with release of beta-D-glucose.. It participates in glycan metabolism; cellulose degradation. This chain is Beta-glucosidase A (bglA), found in Acetivibrio thermocellus (strain ATCC 27405 / DSM 1237 / JCM 9322 / NBRC 103400 / NCIMB 10682 / NRRL B-4536 / VPI 7372) (Clostridium thermocellum).